Consider the following 355-residue polypeptide: Protein RecA (355 aa).

73 to 80 provides a ligand contact to ATP; that stretch reads GPESSGKT.

The protein belongs to the RecA family.

Its subcellular location is the cytoplasm. Can catalyze the hydrolysis of ATP in the presence of single-stranded DNA, the ATP-dependent uptake of single-stranded DNA by duplex DNA, and the ATP-dependent hybridization of homologous single-stranded DNAs. It interacts with LexA causing its activation and leading to its autocatalytic cleavage. This is Protein RecA from Solidesulfovibrio magneticus (strain ATCC 700980 / DSM 13731 / RS-1) (Desulfovibrio magneticus).